The chain runs to 167 residues: Small ribosomal subunit protein uS5 (167 aa).

The region spanning 12 to 75 (LQEKLIAVNR…EKARRNIVTV (64 aa)) is the S5 DRBM domain.

The protein belongs to the universal ribosomal protein uS5 family. In terms of assembly, part of the 30S ribosomal subunit. Contacts proteins S4 and S8.

In terms of biological role, with S4 and S12 plays an important role in translational accuracy. Its function is as follows. Located at the back of the 30S subunit body where it stabilizes the conformation of the head with respect to the body. The protein is Small ribosomal subunit protein uS5 of Shewanella baltica (strain OS223).